Reading from the N-terminus, the 507-residue chain is ATP synthase subunit alpha, mitochondrial (507 aa).

Residue 171-178 (GDRQTGKT) coordinates ATP.

Belongs to the ATPase alpha/beta chains family. In terms of assembly, F-type ATPases have 2 components, CF(1) - the catalytic core - and CF(0) - the membrane proton channel. CF(1) has five subunits: alpha(3), beta(3), gamma(1), delta(1), epsilon(1). CF(0) has three main subunits: a, b and c.

Its subcellular location is the mitochondrion. It is found in the mitochondrion inner membrane. Mitochondrial membrane ATP synthase (F(1)F(0) ATP synthase or Complex V) produces ATP from ADP in the presence of a proton gradient across the membrane which is generated by electron transport complexes of the respiratory chain. F-type ATPases consist of two structural domains, F(1) - containing the extramembraneous catalytic core, and F(0) - containing the membrane proton channel, linked together by a central stalk and a peripheral stalk. During catalysis, ATP synthesis in the catalytic domain of F(1) is coupled via a rotary mechanism of the central stalk subunits to proton translocation. Subunits alpha and beta form the catalytic core in F(1). Rotation of the central stalk against the surrounding alpha(3)beta(3) subunits leads to hydrolysis of ATP in three separate catalytic sites on the beta subunits. Subunit alpha does not bear the catalytic high-affinity ATP-binding sites. The protein is ATP synthase subunit alpha, mitochondrial (ATPA) of Pisum sativum (Garden pea).